The primary structure comprises 872 residues: Paladin (872 aa).

A disordered region spans residues 1–37 (MGTTASAAQQVPSTVPSSENVQGNGSGSSNVEDRNSL). G2 is lipidated: N-myristoyl glycine. A coiled-coil region spans residues 186–210 (RRKENLHENLHDLEKGLRAENLELA).

Belongs to the paladin family.

The protein localises to the cytoplasm. It is found in the cytosol. This is Paladin (pald1) from Xenopus tropicalis (Western clawed frog).